The primary structure comprises 709 residues: Elongation factor G (709 aa).

The 288-residue stretch at 9-296 folds into the tr-type G domain; the sequence is AKVRNIGIMA…AVVRYLPSPL (288 aa). GTP contacts are provided by residues 18–25, 86–90, and 140–143; these read AHIDAGKT, DTPGH, and NKLD.

It belongs to the TRAFAC class translation factor GTPase superfamily. Classic translation factor GTPase family. EF-G/EF-2 subfamily.

It is found in the cytoplasm. Catalyzes the GTP-dependent ribosomal translocation step during translation elongation. During this step, the ribosome changes from the pre-translocational (PRE) to the post-translocational (POST) state as the newly formed A-site-bound peptidyl-tRNA and P-site-bound deacylated tRNA move to the P and E sites, respectively. Catalyzes the coordinated movement of the two tRNA molecules, the mRNA and conformational changes in the ribosome. This chain is Elongation factor G, found in Streptomyces griseus subsp. griseus (strain JCM 4626 / CBS 651.72 / NBRC 13350 / KCC S-0626 / ISP 5235).